Consider the following 227-residue polypeptide: PKHD-type hydroxylase BTH_II1201 (227 aa).

Residues 78 to 178 (KVFPPLFNRY…RVASFFWIQS (101 aa)) enclose the Fe2OG dioxygenase domain. Residues histidine 96, aspartate 98, and histidine 159 each contribute to the Fe cation site. Arginine 169 is a 2-oxoglutarate binding site.

Fe(2+) serves as cofactor. Requires L-ascorbate as cofactor.

This chain is PKHD-type hydroxylase BTH_II1201, found in Burkholderia thailandensis (strain ATCC 700388 / DSM 13276 / CCUG 48851 / CIP 106301 / E264).